A 478-amino-acid chain; its full sequence is ATP-dependent DNA helicase RecQ (478 aa).

The 175-residue stretch at 28–202 (IDCLLARRDC…VEGLNLRSPE (175 aa)) folds into the Helicase ATP-binding domain. 41-48 (LPTGGGKS) lines the ATP pocket. Residues 142 to 145 (DEAH) carry the DEAH box motif. The Helicase C-terminal domain maps to 229–380 (QLRRFLLKHL…RAEVLSQQIP (152 aa)). Zn(2+)-binding residues include Cys447, Cys467, Cys470, and Cys473.

It belongs to the helicase family. RecQ subfamily. It depends on Mg(2+) as a cofactor. Zn(2+) is required as a cofactor.

The enzyme catalyses Couples ATP hydrolysis with the unwinding of duplex DNA by translocating in the 3'-5' direction.. The catalysed reaction is ATP + H2O = ADP + phosphate + H(+). An ATP-dependent DNA helicase which unwinds DNA in a 3'-5' direction. The sequence is that of ATP-dependent DNA helicase RecQ from Synechocystis sp. (strain ATCC 27184 / PCC 6803 / Kazusa).